Reading from the N-terminus, the 587-residue chain is Bifunctional lycopene cyclase/phytoene synthase (587 aa).

The lycopene beta-cyclase stretch occupies residues 1–236 (MGLDYILVHV…IVFGLVCIDY (236 aa)). The next 7 membrane-spanning stretches (helical) occupy residues 5–25 (YILVHVTYNIPLAGILTLVYW), 35–55 (KISTLVIISLVATIPWDSYLV), 65–85 (NGVIGWTLYDIPSEEVFFFII), 91–111 (SLVYLILTRWLVLPMYLGTVA), 116–136 (LIGASILLLAISVGLIALCFG), 145–165 (IITWAGPFLLIQWVFSSGFII), and 218–238 (LFFLITNIVIVFGLVCIDYAI). Residues 243–587 (CELVQSPQAV…VAYRAMAWRK (345 aa)) form a phytoene synthase region.

In the N-terminal section; belongs to the lycopene beta-cyclase family. It in the C-terminal section; belongs to the phytoene/squalene synthase family.

The protein localises to the membrane. It catalyses the reaction all-trans-lycopene = gamma-carotene. The catalysed reaction is gamma-carotene = all-trans-beta-carotene. It carries out the reaction 2 (2E,6E,10E)-geranylgeranyl diphosphate = 15-cis-phytoene + 2 diphosphate. It participates in carotenoid biosynthesis; beta-carotene biosynthesis. It functions in the pathway carotenoid biosynthesis; phytoene biosynthesis; all-trans-phytoene from geranylgeranyl diphosphate: step 1/1. Bifunctional enzyme that catalyzes the reactions from geranylgeranyl diphosphate to phytoene (phytoene synthase) and lycopene to beta-carotene via the intermediate gamma-carotene (lycopene cyclase). This Aspergillus oryzae (strain ATCC 42149 / RIB 40) (Yellow koji mold) protein is Bifunctional lycopene cyclase/phytoene synthase.